Consider the following 95-residue polypeptide: MAKNLSAIKRIKTSERNRLINRKYKSVVKTLTKRCLLNIDNLESDNFNDVQSSISQVYSKIDKAVKKGAFHPNTGARKKARLARALSFAQKNRID.

Belongs to the bacterial ribosomal protein bS20 family.

Its subcellular location is the plastid. The protein localises to the chloroplast. Binds directly to 16S ribosomal RNA. This chain is Small ribosomal subunit protein bS20c, found in Pyropia yezoensis (Susabi-nori).